We begin with the raw amino-acid sequence, 141 residues long: Large ribosomal subunit protein uL11 (141 aa).

It belongs to the universal ribosomal protein uL11 family. In terms of assembly, part of the ribosomal stalk of the 50S ribosomal subunit. Interacts with L10 and the large rRNA to form the base of the stalk. L10 forms an elongated spine to which L12 dimers bind in a sequential fashion forming a multimeric L10(L12)X complex. One or more lysine residues are methylated.

Functionally, forms part of the ribosomal stalk which helps the ribosome interact with GTP-bound translation factors. This is Large ribosomal subunit protein uL11 from Synechococcus sp. (strain ATCC 27144 / PCC 6301 / SAUG 1402/1) (Anacystis nidulans).